A 360-amino-acid polypeptide reads, in one-letter code: Phospho-N-acetylmuramoyl-pentapeptide-transferase (360 aa).

10 consecutive transmembrane segments (helical) span residues 26-46 (AILGLLTALMFSLWWGPKLIE), 74-94 (MGGLLILGAIFLSVLLWGDLG), 97-117 (YVWVMLFVLGSFGMIGFIDDY), 134-154 (YILQSLAALIIAFFLYTTAAN), 168-188 (VMPQLGAVFIVLAYFTIVGSS), 199-219 (GLAIMPTVMVAAAFALIAYLS), 236-256 (SGELVIVCTAIVGAGLGFLWF), 263-283 (VFMGDVGSLSLGAALGAIAVL), 288-308 (ILLVIMGGVFVMETVSVILQV), and 338-358 (VIVRFWIISIFLVLLGLATLK).

It belongs to the glycosyltransferase 4 family. MraY subfamily. Mg(2+) is required as a cofactor.

The protein localises to the cell inner membrane. It carries out the reaction UDP-N-acetyl-alpha-D-muramoyl-L-alanyl-gamma-D-glutamyl-meso-2,6-diaminopimeloyl-D-alanyl-D-alanine + di-trans,octa-cis-undecaprenyl phosphate = di-trans,octa-cis-undecaprenyl diphospho-N-acetyl-alpha-D-muramoyl-L-alanyl-D-glutamyl-meso-2,6-diaminopimeloyl-D-alanyl-D-alanine + UMP. Its pathway is cell wall biogenesis; peptidoglycan biosynthesis. Catalyzes the initial step of the lipid cycle reactions in the biosynthesis of the cell wall peptidoglycan: transfers peptidoglycan precursor phospho-MurNAc-pentapeptide from UDP-MurNAc-pentapeptide onto the lipid carrier undecaprenyl phosphate, yielding undecaprenyl-pyrophosphoryl-MurNAc-pentapeptide, known as lipid I. This chain is Phospho-N-acetylmuramoyl-pentapeptide-transferase, found in Shewanella oneidensis (strain ATCC 700550 / JCM 31522 / CIP 106686 / LMG 19005 / NCIMB 14063 / MR-1).